A 296-amino-acid chain; its full sequence is Iron(3+)-hydroxamate-binding protein FhuD (296 aa).

Residues 1-30 (MSGLPLISRRRLLTAMALSPLLWQMNTAHA) constitute a signal peptide (tat-type signal). Residues 37-296 (RIVALEWLPV…VLDNAIGGKA (260 aa)) form the Fe/B12 periplasmic-binding domain. 9 residues coordinate Fe(III)-coprogen: tryptophan 68, arginine 84, serine 103, tyrosine 106, phenylalanine 124, tryptophan 217, tryptophan 273, phenylalanine 274, and tyrosine 275.

It belongs to the bacterial solute-binding protein 8 family. As to quaternary structure, the complex is composed of two ATP-binding proteins (FhuC), a transmembrane protein (FhuB) and a solute-binding protein (FhuD). FhuD interacts with FhuB. Substrate-loaded FhuD binds FhuB more strongly than FhuD alone. Exported by the Tat system. The position of the signal peptide cleavage has been experimentally proven. Can also be exported by the Sec system.

It localises to the periplasm. Part of the ABC transporter complex FhuCDB involved in iron(3+)-hydroxamate import. Binds the iron(3+)-hydroxamate complex and transfers it to the membrane-bound permease. Required for the transport of all iron(3+)-hydroxamate siderophores such as ferrichrome, gallichrome, desferrioxamine, coprogen, aerobactin, shizokinen, rhodotorulic acid and the antibiotic albomycin. The sequence is that of Iron(3+)-hydroxamate-binding protein FhuD (fhuD) from Escherichia coli (strain K12).